The chain runs to 78 residues: Beta-defensin 12 (78 aa).

A signal peptide spans M1–A27. Cystine bridges form between C46-C73, C53-C67, and C57-C74.

This sequence belongs to the beta-defensin family. In terms of tissue distribution, only expressed in epididymis (caput, corpus and cauda).

It is found in the secreted. Has antibacterial activity. The chain is Beta-defensin 12 (Defb12) from Mus musculus (Mouse).